Here is a 377-residue protein sequence, read N- to C-terminus: Nitric oxide reductase FlRd-NAD(+) reductase (377 aa).

The protein belongs to the FAD-dependent oxidoreductase family. It depends on FAD as a cofactor.

The protein localises to the cytoplasm. The enzyme catalyses 2 reduced [nitric oxide reductase rubredoxin domain] + NAD(+) + H(+) = 2 oxidized [nitric oxide reductase rubredoxin domain] + NADH. The protein operates within nitrogen metabolism; nitric oxide reduction. One of at least two accessory proteins for anaerobic nitric oxide (NO) reductase. Reduces the rubredoxin moiety of NO reductase. In Escherichia coli O7:K1 (strain IAI39 / ExPEC), this protein is Nitric oxide reductase FlRd-NAD(+) reductase.